Here is a 425-residue protein sequence, read N- to C-terminus: Adenylosuccinate synthetase (425 aa).

GTP contacts are provided by residues glycine 12–lysine 18 and glycine 40–threonine 42. Residue aspartate 13 is the Proton acceptor of the active site. Residues aspartate 13 and glycine 40 each contribute to the Mg(2+) site. Residues aspartate 13 to lysine 16, asparagine 38 to histidine 41, threonine 130, arginine 144, glutamine 224, threonine 239, and arginine 301 contribute to the IMP site. The active-site Proton donor is the histidine 41. Residue threonine 297–arginine 303 participates in substrate binding. Residues arginine 303, lysine 329–aspartate 331, and serine 411–serine 413 each bind GTP.

Belongs to the adenylosuccinate synthetase family. In terms of assembly, homodimer. Mg(2+) serves as cofactor.

The protein resides in the cytoplasm. It carries out the reaction IMP + L-aspartate + GTP = N(6)-(1,2-dicarboxyethyl)-AMP + GDP + phosphate + 2 H(+). Its pathway is purine metabolism; AMP biosynthesis via de novo pathway; AMP from IMP: step 1/2. In terms of biological role, plays an important role in the de novo pathway of purine nucleotide biosynthesis. Catalyzes the first committed step in the biosynthesis of AMP from IMP. The sequence is that of Adenylosuccinate synthetase from Wolbachia sp. subsp. Drosophila simulans (strain wRi).